We begin with the raw amino-acid sequence, 173 residues long: NADH-ubiquinone oxidoreductase chain 6 (173 aa).

4 helical membrane passes run 12–32, 47–67, 94–114, and 142–162; these read VFWLIGVSSNISVYYGVVSLV, GSFLALVLFLIYLGGMLVIFA, VVLAVVFVLVGWGWWGVGECG, and GALMMAMFGLFLTFFIVLVLV.

Belongs to the complex I subunit 6 family.

It is found in the mitochondrion membrane. It carries out the reaction a ubiquinone + NADH + 5 H(+)(in) = a ubiquinol + NAD(+) + 4 H(+)(out). Its function is as follows. Core subunit of the mitochondrial membrane respiratory chain NADH dehydrogenase (Complex I) that is believed to belong to the minimal assembly required for catalysis. Complex I functions in the transfer of electrons from NADH to the respiratory chain. The immediate electron acceptor for the enzyme is believed to be ubiquinone. The polypeptide is NADH-ubiquinone oxidoreductase chain 6 (MT-ND6) (Pelomedusa subrufa (African side-necked turtle)).